Consider the following 180-residue polypeptide: MDLKSNIKLILATDLLAVLILSLFIKNFKMVLAFLLAVFVIWLFIDKNNINERLYENLLAMSVGFIEGILIFLGIIYNEVFLDITLGIFAILILIVMGILFPKYKLIFEVFDEFVEHLKQKSGFLTLISIFGMLLTIYVFLLILPSKEFCINAVDIIRTIMLVITANMFIIEFYTFKKFS.

Transmembrane regions (helical) follow at residues 4-24, 25-45, 57-77, 81-101, 124-144, and 156-176; these read KSNI…LSLF, IKNF…WLFI, NLLA…GIIY, FLDI…GILF, FLTL…LLIL, and IIRT…FYTF.

The protein resides in the cell membrane. This is an uncharacterized protein from Methanocaldococcus jannaschii (strain ATCC 43067 / DSM 2661 / JAL-1 / JCM 10045 / NBRC 100440) (Methanococcus jannaschii).